Consider the following 436-residue polypeptide: Chorion-specific transcription factor GCMa (436 aa).

The GCM DNA-binding region spans L14 to M169. 8 residues coordinate Zn(2+): C76, C82, C86, C113, C116, C125, H152, and H154. Positions K171–L202 are disordered. Residues T174–L202 are compositionally biased toward polar residues.

Polyubiquitinated in the presence of UBE2D2 and FBXW2 (in vitro). As to expression, highly expressed in the placenta. Expressed in trophoblast cells of the villi.

It localises to the nucleus. Transcription factor involved in the control of expression of placental growth factor (PGF) and other placenta-specific genes. Binds to the trophoblast-specific element 2 (TSE2) of the aromatase gene enhancer. Binds to the SYDE1 promoter. Has a central role in mediating the differentiation of trophoblast cells along both the villous and extravillous pathways in placental development. The protein is Chorion-specific transcription factor GCMa (GCM1) of Homo sapiens (Human).